The sequence spans 339 residues: DNA-directed RNA polymerase subunit alpha (339 aa).

An alpha N-terminal domain (alpha-NTD) region spans residues 1–233; that stretch reads MVREEVAGST…DLFLPFLHAE (233 aa). The tract at residues 264 to 339 is alpha C-terminal domain (alpha-CTD); it reads KKGIPLNCIF…IDLLKNKLSF (76 aa).

Belongs to the RNA polymerase alpha chain family. In terms of assembly, in plastids the minimal PEP RNA polymerase catalytic core is composed of four subunits: alpha, beta, beta', and beta''. When a (nuclear-encoded) sigma factor is associated with the core the holoenzyme is formed, which can initiate transcription.

It is found in the plastid. The protein localises to the chloroplast. The catalysed reaction is RNA(n) + a ribonucleoside 5'-triphosphate = RNA(n+1) + diphosphate. DNA-dependent RNA polymerase catalyzes the transcription of DNA into RNA using the four ribonucleoside triphosphates as substrates. This is DNA-directed RNA polymerase subunit alpha from Heteranthelium piliferum (Elymus pilifer).